The following is a 457-amino-acid chain: Multidrug resistance protein MdtK (457 aa).

Over 1–10 (MQKYISEARL) the chain is Cytoplasmic. A helical membrane pass occupies residues 11 to 31 (LLALAIPVILAQIAQTAMGFV). Over 32 to 52 (DTVMAGGYSATDMAAVAIGTS) the chain is Periplasmic. A helical transmembrane segment spans residues 53-73 (IWLPAILFGHGLLLALTPVIA). At 74-92 (QLNGSGRRERIAHQVRQGF) the chain is on the cytoplasmic side. A helical membrane pass occupies residues 93–113 (WLAGFVSVLIMLVLWNAGYII). At 114–126 (RYMENIDPALADK) the chain is on the periplasmic side. A helical transmembrane segment spans residues 127 to 147 (AVGYLRALLWGAPGYLFFQVA). The Cytoplasmic portion of the chain corresponds to 148–159 (RNQCEGLAKAKP). A helical transmembrane segment spans residues 160-180 (GMVMGFIGLLVNIPVNYIFIY). Topologically, residues 181–188 (GHFGMPEL) are periplasmic. The chain crosses the membrane as a helical span at residues 189–209 (GGVGCGVATAAVYWVMFLAMV). Topologically, residues 210–242 (SYIKRARSMRDIRNEKGTAKPEPAVMKRLIQLG) are cytoplasmic. A helical membrane pass occupies residues 243 to 263 (LPIALALFLEVTLFAVVALLV). The Periplasmic segment spans residues 264 to 275 (SPLGIVDVAGHQ). A helical membrane pass occupies residues 276–296 (IALNFSSLMFVLPMSLAAAVT). Over 297 to 313 (IRVGYRLGQGSTLDAQT) the chain is Cytoplasmic. A helical membrane pass occupies residues 314-334 (AARTGLMVGVCMATLTAIFTV). Topologically, residues 335 to 349 (SLREQIALLYNDNPE) are periplasmic. Residues 350-370 (VVTLAAHLMLLAAVYQISDSI) form a helical membrane-spanning segment. The Cytoplasmic portion of the chain corresponds to 371-386 (QVIGSGILRGYKDTRS). Residues 387-407 (IFYITFTAYWVLGLPSGYILA) form a helical membrane-spanning segment. The Periplasmic segment spans residues 408 to 417 (LTDLVVEPMG). Residues 418 to 438 (PAGFWIGFIIGLTSAAIMMML) form a helical membrane-spanning segment. Over 439 to 457 (RMRFLQRMPSAIILQRASR) the chain is Cytoplasmic.

It belongs to the multi antimicrobial extrusion (MATE) (TC 2.A.66.1) family. MdtK subfamily.

It localises to the cell inner membrane. Functionally, multidrug efflux pump that functions probably as a Na(+)/drug antiporter. This Shigella flexneri serotype 5b (strain 8401) protein is Multidrug resistance protein MdtK.